A 179-amino-acid chain; its full sequence is MSRIGKRPIPLPAKVSVDIQGSHLSVKGPKGSLERQLPEKVIVAQEGETITVTRQDESRTARERHGLVRTLVANMVDGVAQGFERRLEIQGVGYRAQAQGNKLTLNVGYSKPVEMTMPQGIEVKVENNTQVIVSGIDKELLGNTAAKIRAVRPPEPYKGKGIRYQGEYVRRKAGKTGKK.

The protein belongs to the universal ribosomal protein uL6 family. As to quaternary structure, part of the 50S ribosomal subunit.

Functionally, this protein binds to the 23S rRNA, and is important in its secondary structure. It is located near the subunit interface in the base of the L7/L12 stalk, and near the tRNA binding site of the peptidyltransferase center. The protein is Large ribosomal subunit protein uL6 of Synechocystis sp. (strain ATCC 27184 / PCC 6803 / Kazusa).